The sequence spans 30 residues: V-type proton ATPase catalytic subunit A isoform 1 (30 aa).

Belongs to the ATPase alpha/beta chains family. As to quaternary structure, V-ATPase is a heteromultimeric enzyme composed of a peripheral catalytic V1 complex (main components: subunits A, B, C, D, E, and F) attached to an integral membrane V0 proton pore complex (main component: the proteolipid protein).

The catalysed reaction is ATP + H2O + 4 H(+)(in) = ADP + phosphate + 5 H(+)(out). In terms of biological role, catalytic subunit of the peripheral V1 complex of vacuolar ATPase. V-ATPase vacuolar ATPase is responsible for acidifying a variety of intracellular compartments in eukaryotic cells. This Psilotum nudum (Whisk fern) protein is V-type proton ATPase catalytic subunit A isoform 1.